The following is a 324-amino-acid chain: HTH-type transcriptional regulator CysB (324 aa).

An HTH lysR-type domain is found at 1–59; it reads MKLQQLRYIVEVVNHNLNVSSTAEGLYTSQPGISKQVRMLEDELGIQIFARSGKHLTQV. The H-T-H motif DNA-binding region spans 19–38; the sequence is VSSTAEGLYTSQPGISKQVR.

This sequence belongs to the LysR transcriptional regulatory family. Homotetramer.

It is found in the cytoplasm. Its function is as follows. This protein is a positive regulator of gene expression for the cysteine regulon, a system of 10 or more loci involved in the biosynthesis of L-cysteine from inorganic sulfate. The inducer for CysB is N-acetylserine. CysB inhibits its own transcription. This is HTH-type transcriptional regulator CysB (cysB) from Salmonella typhimurium (strain LT2 / SGSC1412 / ATCC 700720).